Reading from the N-terminus, the 2181-residue chain is Genome polyprotein (2181 aa).

Gly-80 carries the N-myristoyl glycine; by host lipid modification. Interaction with host receptor ANTXR1 regions lie at residues 316–337 and 761–772; these read DYRT…PPNW and RFGLYANPSGSG. An SF3 helicase domain is found at 1165-1333; the sequence is LGKTNLAQSL…YKKHTRLNFD (169 aa). Position 1197–1204 (1197–1204) interacts with ATP; sequence GKPGCGKS. Positions 1472–1500 are disordered; that stretch reads EETESEGSVKAPRSENAYDGPKKNSKPPG. O-(5'-phospho-RNA)-tyrosine is present on Tyr-1489. Residues 1511–1704 enclose the Peptidase C3 domain; it reads NVDMGFEAAV…AGTYISKLGL (194 aa). His-1556 serves as the catalytic For protease 3C activity and deubiquitinase activity. Catalysis depends on Asp-1592, which acts as the For protease 3C activity. Catalysis depends on Cys-1668, which acts as the For protease 3C activity and deubiquitinase activity. The RdRp catalytic domain occupies 1950-2068; the sequence is KNTYDVDYSA…GTDYDLDFNE (119 aa). Catalysis depends on for RdRp activity residues Asp-1956 and Asp-2054.

As to quaternary structure, interacts with host entry receptor ANTRX1. In terms of assembly, interacts with host IRF3; this interaction is involved in the suppression of IRF3 and IRF7 expression and phosphorylation by the virus. Interacts with host IRF7; this interaction is involved in the suppression of IRF3 and IRF7 expression and phosphorylation by the virus. Interacts with host MAVS; this interaction allows the cleavage of MAVS and subsequent suppression of host immunity. Interacts with host TRIF; this interaction allows the cleavage of TRIF and subsequent suppression of host immunity. Interacts with host TANK; this interaction allows the cleavage of TANK and subsequent suppression of host immunity. Interacts with host RIGI. Interacts with host TBK1. Interacts with host TRAF3. In terms of processing, specific enzymatic cleavages by the viral protease in vivo yield a variety of precursors and mature proteins. The polyprotein seems to be cotranslationally cleaved at the 2A/2B junction by a ribosomal skip from one codon to the next without formation of a peptide bond. This process would release the P1-2A peptide from the translational complex. During virion maturation, immature virions are rendered infectious following cleavage of VP0 into VP4 and VP2. This maturation seems to be an autocatalytic event triggered by the presence of RNA in the capsid and is followed by a conformational change of the particle. Post-translationally, myristoylation is required during RNA encapsidation and formation of the mature virus particle. In terms of processing, uridylylated by the polymerase and is covalently linked to the 5'-end of genomic RNA. This uridylylated form acts as a nucleotide-peptide primer for the polymerase.

It is found in the virion. The protein localises to the host cytoplasm. Its subcellular location is the host nucleus. It localises to the host nucleolus. The protein resides in the host cytoplasmic vesicle membrane. The catalysed reaction is RNA(n) + a ribonucleoside 5'-triphosphate = RNA(n+1) + diphosphate. It carries out the reaction Selective cleavage of Gln-|-Gly bond in the poliovirus polyprotein. In other picornavirus reactions Glu may be substituted for Gln, and Ser or Thr for Gly.. It catalyses the reaction Thiol-dependent hydrolysis of ester, thioester, amide, peptide and isopeptide bonds formed by the C-terminal Gly of ubiquitin (a 76-residue protein attached to proteins as an intracellular targeting signal).. The enzyme catalyses ATP + H2O = ADP + phosphate + H(+). Functionally, forms an icosahedral capsid of pseudo T=3 symmetry with capsid proteins VP2 and VP3. Together they form an icosahedral capsid composed of 60 copies of each VP1, VP2, and VP3, with a diameter of approximately 325 Angstroms. VP4 lies on the inner surface of the protein shell formed by VP1, VP2 and VP3. All the three latter proteins contain a beta-sheet structure called beta-barrel jelly roll. VP1 is situated at the 12 fivefold axes, whereas VP2 and VP3 are located at the quasi-sixfold axes. Binds the host receptor ANTXR1 for attachment and uncoating (entry). In terms of biological role, forms an icosahedral capsid of pseudo T=3 symmetry with capsid proteins VP2 and VP3. Together they form an icosahedral capsid composed of 60 copies of each VP1, VP2, and VP3, with a diameter of approximately 270 Angstroms. VP4 lies on the inner surface of the protein shell formed by VP1, VP2 and VP3. All the three latter proteins contain a beta-sheet structure called beta-barrel jelly roll. VP1 is situated at the 12 fivefold axes, whereas VP2 and VP3 are located at the quasi-sixfold axes. Binds the host receptor ANTXR1 for attachment and uncoating (entry). Forms an icosahedral capsid of pseudo T=3 symmetry with capsid proteins VP2 and VP3. Together they form an icosahedral capsid composed of 60 copies of each VP1, VP2, and VP3, with a diameter of approximately 270 Angstroms. VP4 lies on the inner surface of the protein shell formed by VP1, VP2 and VP3. All the three latter proteins contain a beta-sheet structure called beta-barrel jelly roll. VP1 is situated at the 12 fivefold axes, whereas VP2 and VP3 are located at the quasi-sixfold axes. Vp3 also seems to be involved in the binding to host receptor ANTXR1 for attachment and uncoating (entry). Its function is as follows. Lies on the inner surface of the capsid shell. After binding to the host receptor, the capsid undergoes conformational changes. Capsid protein VP4 is released, capsid protein VP1 N-terminus is externalized, and together, they shape a pore in the host membrane through which the viral genome is translocated into the host cell cytoplasm. After genome has been released, the channel shrinks. Functionally, VP0 precursor is a component of immature procapsids. In terms of biological role, mediates self-processing of the polyprotein by a translational effect termed 'ribosome skipping'. Mechanistically, 2A-mediated cleavage occurs between the C-terminal glycine and the proline of the downstream protein 2B. Plays an essential role in the virus replication cycle by acting as a viroporin. Creates a pore in the host endoplasmic reticulum and as a consequence releases Ca2+ in the cytoplasm of infected cell. In turn, high levels of cytoplasmic calcium may trigger membrane trafficking and transport of viral ER-associated proteins to viroplasms, sites of viral genome replication. Its function is as follows. Associates with and induces structural rearrangements of intracellular membranes. Functionally, covalently linked to the 5'-end of both the positive-strand and negative-strand genomic RNAs. Acts as a genome-linked replication primer. In terms of biological role, cysteine protease that generates mature viral proteins from the precursor polyprotein. Inactivates crucial host adapter molecules in order to suppress antiviral type-I interferon (type-I IFN) and NF-kappaB production to escape host antiviral innate immune responses. Deubiquitinase that acts on both lysine-48- and lysine-63-linked polyubiquitin chains and inhibits the ubiquitination of the ATP-dependent RNA helicase RIGI, TANK-binding kinase 1 (TBK1), and TNF receptor-associated factor 3 (TRAF3), thereby blocking the expression of IFN-beta and IFN stimulated gene 54 (ISG54). Induces host IRF3 and IRF7 degradation thereby suppressing IRF3- and IRF7-induced type-I IFN production. Also decreases host IRF3 phosphorylation leading to negligible IRF3 activation. Cleaves host MAVS, TRIF and TANK, which are then unable to regulate pattern recognition receptor (PRR)-mediated type-I IFN production. Inhibits the integrated stress response (ISR) in the infected cell by disrupting eIF4GI-G3BP1 interaction. Stress granule formation is thus inhibited. Replicates the genomic and antigenomic RNAs by recognizing replications specific signals. Performs VPg uridylylation. The polypeptide is Genome polyprotein (Sus scrofa (Pig)).